The following is a 200-amino-acid chain: Potassium-transporting ATPase KdpC subunit (200 aa).

The chain crosses the membrane as a helical span at residues 9–31 (LVMLVALTALTGLVYPLAMTGVA). Positions 68–97 (GRPSATTAPDPQDSSKTVPSPYNAANSMGA) are disordered. Polar residues predominate over residues 71–96 (SATTAPDPQDSSKTVPSPYNAANSMG).

Belongs to the KdpC family. As to quaternary structure, the system is composed of three essential subunits: KdpA, KdpB and KdpC.

It localises to the cell inner membrane. Part of the high-affinity ATP-driven potassium transport (or Kdp) system, which catalyzes the hydrolysis of ATP coupled with the electrogenic transport of potassium into the cytoplasm. This subunit acts as a catalytic chaperone that increases the ATP-binding affinity of the ATP-hydrolyzing subunit KdpB by the formation of a transient KdpB/KdpC/ATP ternary complex. This chain is Potassium-transporting ATPase KdpC subunit, found in Rhodopseudomonas palustris (strain BisA53).